Reading from the N-terminus, the 60-residue chain is Cytotoxin 1 (60 aa).

Disulfide bonds link Cys3-Cys21, Cys14-Cys38, Cys42-Cys53, and Cys54-Cys59.

The protein belongs to the three-finger toxin family. Short-chain subfamily. Type IA cytotoxin sub-subfamily. Monomer, or heterodimer with alpha-cobratoxin (AC P01391); disulfide-linked. In terms of tissue distribution, expressed by the venom gland.

The protein resides in the secreted. Its subcellular location is the target cell membrane. Functionally, monomer: shows cytolytic activity (apoptosis is induced in C2C12 cells, but no cytotoxicity is observed on INS-1E). In addition, this toxin shows insulinotropic activity that may be mediated by the modulation of potassium channels (Kv). It induces the increase of intracellular calcium release. It induces insulin secretion from rat INS-1E cells in absence and in presence of glucose, without affecting cell viability and integrity. In presence of glucose, the insulinotropic activity is increased, suggesting a possible synergistic effect with glucose. Its insulinotropic activity does not involve GLP-1R signaling. Heterodimer: has no cytolytic activity, but retains most of the alpha-cobratoxin capacity to compete with alpha-bungarotoxin for binding to Torpedo and alpha-7/CHRNA7 nicotinic acetylcholine receptors (nAChRs) as well as to Lymnea stagnalis acetylcholine-binding protein. The protein is Cytotoxin 1 of Naja kaouthia (Monocled cobra).